Reading from the N-terminus, the 198-residue chain is MFFYVLLLALMAQGWSLPQGKTGEDSPVFRPPSPPMGPSLPPPVSHDLHRPSGHPEEFRTGASLPPKETPNEPRHGRPKRDLHHGKVVPTGVPHHTGEVLHHTDCSSNTHKSHEENRPKGFRTGRPLLPIKPEHGRHRRDLHHGKAVPTGVPHHTEKFHNGSNGKSHPPRPGHSTSAHNDNSSEEKRPKHGQEQGKKH.

An N-terminal signal peptide occupies residues 1–18 (MFFYVLLLALMAQGWSLP). The segment at 17-198 (LPQGKTGEDS…KHGQEQGKKH (182 aa)) is disordered. Residues 29–44 (FRPPSPPMGPSLPPPV) show a composition bias toward pro residues. Over residues 46–59 (HDLHRPSGHPEEFR) the composition is skewed to basic and acidic residues. A compositionally biased stretch (basic residues) spans 76–86 (GRPKRDLHHGK). The segment covering 95–104 (HTGEVLHHTD) has biased composition (basic and acidic residues). Positions 134 to 145 (HGRHRRDLHHGK) are enriched in basic residues. The span at 181–198 (NSSEEKRPKHGQEQGKKH) shows a compositional bias: basic and acidic residues.

In terms of tissue distribution, expressed in the periphery of the cement gland as well as in the region of the hatching gland.

The protein resides in the secreted. This chain is Protein XA-1, found in Xenopus laevis (African clawed frog).